We begin with the raw amino-acid sequence, 333 residues long: L-lactate dehydrogenase A chain (333 aa).

Residues 30-58 (GAVG…IEDK) and R100 contribute to the NAD(+) site. Residues R107, N139, and R170 each contribute to the substrate site. N139 contacts NAD(+). The active-site Proton acceptor is H194. T249 lines the substrate pocket.

The protein belongs to the LDH/MDH superfamily. LDH family. As to quaternary structure, homotetramer.

Its subcellular location is the cytoplasm. The catalysed reaction is (S)-lactate + NAD(+) = pyruvate + NADH + H(+). The protein operates within fermentation; pyruvate fermentation to lactate; (S)-lactate from pyruvate: step 1/1. Its function is as follows. Interconverts simultaneously and stereospecifically pyruvate and lactate with concomitant interconversion of NADH and NAD(+). The polypeptide is L-lactate dehydrogenase A chain (LDHA) (Ambystoma mexicanum (Axolotl)).